A 134-amino-acid polypeptide reads, in one-letter code: Methylglyoxal synthase (134 aa).

An MGS-like domain is found at 1-134 (MKIALIAHDR…DWRLIQERRN (134 aa)). Substrate-binding positions include H8, K12, 34 to 37 (TGTT), and 54 to 55 (SG). The active-site Proton donor/acceptor is the D60. A substrate-binding site is contributed by H87.

The protein belongs to the methylglyoxal synthase family.

The enzyme catalyses dihydroxyacetone phosphate = methylglyoxal + phosphate. Functionally, catalyzes the formation of methylglyoxal from dihydroxyacetone phosphate. The protein is Methylglyoxal synthase of Lysinibacillus sphaericus (strain C3-41).